We begin with the raw amino-acid sequence, 1150 residues long: Alpha-mannosidase 2 (1150 aa).

Residues 1–5 (MKLSR) lie on the Cytoplasmic side of the membrane. The chain crosses the membrane as a helical; Signal-anchor for type II membrane protein span at residues 6 to 26 (QFTVFGSAIFCVVIFSLYLML). Residues 27–1150 (DRGHLDYPRG…STFRIRLRWT (1124 aa)) lie on the Lumenal side of the membrane. N-linked (GlcNAc...) asparagine glycosylation is present at asparagine 78. Residues serine 80 and serine 82 each carry the phosphoserine modification. Asparagine 93 is a glycosylation site (N-linked (GlcNAc...) asparagine). Zn(2+) contacts are provided by histidine 174, aspartate 176, aspartate 288, and histidine 568. Aspartate 288 acts as the Nucleophile in catalysis. N-linked (GlcNAc...) asparagine glycosylation occurs at asparagine 1129.

The protein belongs to the glycosyl hydrolase 38 family. As to quaternary structure, homodimer; disulfide-linked. Zn(2+) serves as cofactor. Post-translationally, glycosylated. In terms of tissue distribution, all tissues, mostly in adrenal and thymus.

It is found in the golgi apparatus membrane. It carries out the reaction N(4)-{beta-D-GlcNAc-(1-&gt;2)-alpha-D-Man-(1-&gt;3)-[alpha-D-Man-(1-&gt;3)-[alpha-D-Man-(1-&gt;6)]-alpha-D-Man-(1-&gt;6)]-beta-D-Man-(1-&gt;4)-beta-D-GlcNAc-(1-&gt;4)-beta-D-GlcNAc}-L-asparaginyl-[protein] + 2 H2O = 2 alpha-D-mannopyranose + an N(4)-{beta-D-GlcNAc-(1-&gt;2)-alpha-D-Man-(1-&gt;3)-[alpha-D-Man-(1-&gt;6)]-beta-D-Man-(1-&gt;4)-beta-D-GlcNAc-(1-&gt;4)-beta-D-GlcNAc}-L-asparaginyl-[protein]. It functions in the pathway protein modification; protein glycosylation. In terms of biological role, catalyzes the first committed step in the biosynthesis of complex N-glycans. It controls conversion of high mannose to complex N-glycans; the final hydrolytic step in the N-glycan maturation pathway. This chain is Alpha-mannosidase 2 (Man2a1), found in Mus musculus (Mouse).